The primary structure comprises 142 residues: Large ribosomal subunit protein uL23 (142 aa).

It belongs to the universal ribosomal protein uL23 family. In terms of assembly, component of the large ribosomal subunit. Mature ribosomes consist of a small (40S) and a large (60S) subunit. The 40S subunit contains about 32 different proteins and 1 molecule of RNA (18S). The 60S subunit contains 45 different proteins and 3 molecules of RNA (25S, 5.8S and 5S).

The protein resides in the cytoplasm. Its function is as follows. Component of the ribosome, a large ribonucleoprotein complex responsible for the synthesis of proteins in the cell. The small ribosomal subunit (SSU) binds messenger RNAs (mRNAs) and translates the encoded message by selecting cognate aminoacyl-transfer RNA (tRNA) molecules. The large subunit (LSU) contains the ribosomal catalytic site termed the peptidyl transferase center (PTC), which catalyzes the formation of peptide bonds, thereby polymerizing the amino acids delivered by tRNAs into a polypeptide chain. The nascent polypeptides leave the ribosome through a tunnel in the LSU and interact with protein factors that function in enzymatic processing, targeting, and the membrane insertion of nascent chains at the exit of the ribosomal tunnel. RPL25 is a major component of the universal docking site for these factors at the polypeptide exit tunnel. The protein is Large ribosomal subunit protein uL23 of Candida albicans (strain SC5314 / ATCC MYA-2876) (Yeast).